A 170-amino-acid polypeptide reads, in one-letter code: Peptidyl-prolyl cis-trans isomerase ESS1 (170 aa).

Residues 9–43 enclose the WW domain; sequence TGLPTPWTVRYSKSKKREYFFNPETKHSQWEEPEG. The disordered stretch occupies residues 30 to 53; the sequence is NPETKHSQWEEPEGTNKDQLHKHL. Positions 32-53 are enriched in basic and acidic residues; sequence ETKHSQWEEPEGTNKDQLHKHL. The PpiC domain occupies 57-170; the sequence is PVRVRCLHIL…SGVHVIKRVG (114 aa). Serine 161 bears the Phosphoserine mark.

The protein belongs to the PpiC/parvulin rotamase family. In terms of assembly, interacts with the RNA polymerase II largest subunit (RPB1) and with the SIN1-RDP3 HDAC subunit SIN3.

It localises to the cytoplasm. The protein resides in the nucleus. It catalyses the reaction [protein]-peptidylproline (omega=180) = [protein]-peptidylproline (omega=0). Inhibited by 5-hydroxy-1,4-naphthoquinone (juglone), but not by FK506 or cyclosporin A. Functionally, essential PPIase specific for phosphoserine and phosphothreonine N-terminal to the proline residue. Required for efficient pre-mRNA 3'-end processing and transcription termination, probably by inducing conformational changes by proline-directed isomerization in the C-terminal domain (CTD) of RPB1, thereby altering cofactor binding with the RNA polymerase II transcription complex. Also targets the SIN3-RPD3 histone deacetylase complex (HDAC). The protein is Peptidyl-prolyl cis-trans isomerase ESS1 (ESS1) of Saccharomyces cerevisiae (strain ATCC 204508 / S288c) (Baker's yeast).